Here is a 113-residue protein sequence, read N- to C-terminus: Ig heavy chain V-III region E109 (113 aa).

Residues 1 to 113 form the Ig-like domain; sequence EVKLEESGGG…YWGQGTLVTV (113 aa). Cys22 and Cys98 form a disulfide bridge.

The chain is Ig heavy chain V-III region E109 from Mus musculus (Mouse).